We begin with the raw amino-acid sequence, 744 residues long: MDHAEENEIPVATQKYHVERPIFSHPVLQERLHVKDKVSESIGDKLKQAFTCTPKKIRNIIYMFLPITKWLPAYKFKEYVLGDLVSGISTGVLQLPQGLAFAMLAAVPPVFGLYSSFYPVIMYCFFGTSRHISIGPFAVISLMIGGVAVRLVPDDIVIPGGVNATNGTEARDALRVKVAMSVTLLSGIIQFCLGVCRFGFVAIYLTEPLVRGFTTAAAVHVFTSMLKYLFGVKTKRYSGIFSVVYSTVAVLQNVKNLNVCSLGVGLMVFGLLLGGKEFNERFKEKLPAPIPLEFFAVVMGTGISAGFNLHESYSVDVVGTLPLGLLPPANPDTSLFHLVYVDAIAIAIVGFSVTISMAKTLANKHGYQVDGNQELIALGICNSIGSLFQTFSISCSLSRSLVQEGTGGKTQLAGCLASLMILLVILATGFLFESLPQAVLSAIVIVNLKGMFMQFSDLPFFWRTSKIELTIWLTTFVSSLFLGLDYGLITAVIIALLTVIYRTQSPSYKVLGQLPDTDVYIDIDAYEEVKEIPGIKIFQINAPIYYANSDLYSNALKRKTGVNPALIMGARRKAMRKYAKEVGNANIANAAVVKVDGEVDGENATKPEEEDDEVKYPPIVIKTTFPEELQRFMPQTENVHTIILDFTQVNFIDSVGVKTLAVMVKEYGDVGIYVYLAGCSPQVVNDLTRNRFFENPALKELLFHSIHDAVLGSHVREAMAEQEASAPPPQDDMEPNATPTTPEA.

The Cytoplasmic portion of the chain corresponds to 1-79 (MDHAEENEIP…WLPAYKFKEY (79 aa)). A helical transmembrane segment spans residues 80 to 105 (VLGDLVSGISTGVLQLPQGLAFAMLA). Over 106-109 (AVPP) the chain is Extracellular. A helical membrane pass occupies residues 110–125 (VFGLYSSFYPVIMYCF). Residues 126–137 (FGTSRHISIGPF) lie on the Cytoplasmic side of the membrane. Residues 138 to 147 (AVISLMIGGV) traverse the membrane as a helical segment. Residues 148 to 178 (AVRLVPDDIVIPGGVNATNGTEARDALRVKV) are Extracellular-facing. The short motif at 158 to 168 (IPGGVNATNGT) is the Involved in motor function element. Asn163 and Asn166 each carry an N-linked (GlcNAc...) asparagine glycan. Residues 179–196 (AMSVTLLSGIIQFCLGVC) form a helical membrane-spanning segment. Residues 197-208 (RFGFVAIYLTEP) lie on the Cytoplasmic side of the membrane. A helical transmembrane segment spans residues 209-230 (LVRGFTTAAAVHVFTSMLKYLF). Over 231–243 (GVKTKRYSGIFSV) the chain is Extracellular. The helical intramembrane region spans 244-252 (VYSTVAVLQ). Over 253 to 258 (NVKNLN) the chain is Extracellular. A helical transmembrane segment spans residues 259 to 282 (VCSLGVGLMVFGLLLGGKEFNERF). The Cytoplasmic segment spans residues 283 to 291 (KEKLPAPIP). The chain crosses the membrane as a helical span at residues 292–304 (LEFFAVVMGTGIS). Over 305 to 337 (AGFNLHESYSVDVVGTLPLGLLPPANPDTSLFH) the chain is Extracellular. The chain crosses the membrane as a helical span at residues 338–361 (LVYVDAIAIAIVGFSVTISMAKTL). Residues 362–370 (ANKHGYQVD) are Cytoplasmic-facing. Residues 371-388 (GNQELIALGICNSIGSLF) traverse the membrane as a helical segment. Over 389 to 396 (QTFSISCS) the chain is Extracellular. Residues 397–406 (LSRSLVQEGT) traverse the membrane as a helical segment. Ser398 contributes to the salicylate binding site. Residues 407–410 (GGKT) lie on the Cytoplasmic side of the membrane. The chain crosses the membrane as a helical span at residues 411–429 (QLAGCLASLMILLVILATG). At 430–436 (FLFESLP) the chain is on the extracellular side. Residues 437-455 (QAVLSAIVIVNLKGMFMQF) traverse the membrane as a helical segment. The Cytoplasmic portion of the chain corresponds to 456–469 (SDLPFFWRTSKIEL). Residues 470 to 484 (TIWLTTFVSSLFLGL) traverse the membrane as a helical segment. Residue Asp485 is a topological domain, extracellular. The helical transmembrane segment at 486–497 (YGLITAVIIALL) threads the bilayer. At 498 to 744 (TVIYRTQSPS…PNATPTTPEA (247 aa)) the chain is on the cytoplasmic side. An extended region for STAS domain region spans residues 505-718 (SPSYKVLGQL…AVLGSHVREA (214 aa)). Positions 525 to 713 (AYEEVKEIPG…HSIHDAVLGS (189 aa)) constitute an STAS domain. Positions 717–744 (EAMAEQEASAPPPQDDMEPNATPTTPEA) are disordered.

The protein belongs to the SLC26A/SulP transporter (TC 2.A.53) family. In terms of assembly, homodimer. Interacts (via STAS domain) with CALM; this interaction is calcium-dependent and the STAS domain interacts with only one lobe of CALM which is an elongated conformation. Interacts with MYH1. Highly expressed in mature outer hair cells, but not in inner hair cells or other cells of the basilar membrane and the organ of Corti.

It localises to the lateral cell membrane. The catalysed reaction is 2 hydrogencarbonate(in) + chloride(out) = 2 hydrogencarbonate(out) + chloride(in). In terms of biological role, voltage-sensitive motor protein that drives outer hair cell (OHC) electromotility (eM) and participates in sound amplification in the hearing organ. Converts changes in the transmembrane electric potential into mechanical displacements resulting in the coupling of its expansion to movement of a charged voltage sensor across the lipid membrane. The nature of the voltage sensor is not completely clear, and two models compete. In the first model, acts as an incomplete transporter where intracellular chloride anion acts as extrinsic voltage sensor that drives conformational change in the protein which is sufficient to produce a length change in the plane of the membrane and hence in the length of the OHC. The second model in which multiple charged amino acid residues are distributed at the intracellular and extracellular membrane interfaces that form an intrinsic voltage sensor, whose movement produces the non-linear capacitance (NLC). However, the effective voltage sensor may be the result of a hybrid voltage sensor assembled from intrinsic charge (charged residues) and extrinsic charge (bound anion). Notably, binding of anions to the anion-binding pocket partially neutralizes the intrinsic positive charge rather than to form an electrically negative sensor, therefore remaining charge may serve as voltage sensor that, after depolarization, moves from down (expanded state) to up (contracted) conformation, which is accompanied by an eccentric contraction of the intermembrane cross-sectional area of the protein as well as a major increase in the hydrophobic thickness of the protein having as consequences the plasma membrane thickening and the cell contraction after membrane depolarization. The anion-binding pocket transits from the inward-open (Down) state, where it is exposed toward the intracellular solvent in the absence of anion, to the occluded (Up) state upon anion binding. Salicylate competes for the anion-binding site and inhibits the voltage-sensor movement, and therefore inhibits the charge transfer and electromotility by displacing Cl(-) from the anion-binding site and by preventing the structural transitions to the contracted state. In addition, can act as a weak Cl(-)/HCO3 (-) antiporter across the cell membrane and so regulate the intracellular pH of the outer hair cells (OHCs), while firstly found as being unable to mediate electrogenic anion transport. Moreover, supports a role in cardiac mechanical amplification serving as an elastic element to enhance the actomyosin- based sarcomere contraction system. This Meriones unguiculatus (Mongolian jird) protein is Prestin.